A 173-amino-acid polypeptide reads, in one-letter code: MDHDKTGCQSPPEGPKLCTNNCGFFGSAATMNMCSKCHKDMLFQQEQGAKFASAVSGTSSSSNIIKETFTAALVDIETKSVEPMTVSVQPSSVQVVAEVVAPEEAAKPKGPSRCTTCNKRVGLTGFKCRCGSLFCGTHRYADVHDCSFNYHAAAQEAIAKANPVVKAEKLDKI.

The A20-type zinc-finger motif lies at P12–E46. 12 residues coordinate Zn(2+): C18, C22, C34, C37, C114, C117, C128, C130, C135, H138, H144, and C146. The segment at P108 to A154 adopts an AN1-type zinc-finger fold.

In terms of biological role, may be involved in environmental stress response. This chain is Zinc finger A20 and AN1 domain-containing stress-associated protein 2 (SAP2), found in Arabidopsis thaliana (Mouse-ear cress).